The primary structure comprises 232 residues: tRNA1(Val) (adenine(37)-N6)-methyltransferase (232 aa).

This sequence belongs to the methyltransferase superfamily. tRNA (adenine-N(6)-)-methyltransferase family.

It localises to the cytoplasm. It carries out the reaction adenosine(37) in tRNA1(Val) + S-adenosyl-L-methionine = N(6)-methyladenosine(37) in tRNA1(Val) + S-adenosyl-L-homocysteine + H(+). Functionally, specifically methylates the adenine in position 37 of tRNA(1)(Val) (anticodon cmo5UAC). The sequence is that of tRNA1(Val) (adenine(37)-N6)-methyltransferase from Pseudoalteromonas translucida (strain TAC 125).